The chain runs to 394 residues: 1-deoxy-D-xylulose 5-phosphate reductoisomerase (394 aa).

Residues threonine 12, glycine 13, serine 14, isoleucine 15, glycine 38, asparagine 41, and asparagine 132 each coordinate NADPH. 1-deoxy-D-xylulose 5-phosphate is bound at residue lysine 133. Glutamate 134 contributes to the NADPH binding site. Aspartate 156 is a Mn(2+) binding site. 1-deoxy-D-xylulose 5-phosphate-binding residues include serine 157, glutamate 158, serine 182, and histidine 205. Residue glutamate 158 coordinates Mn(2+). Residue glycine 211 coordinates NADPH. The 1-deoxy-D-xylulose 5-phosphate site is built by serine 218, asparagine 223, lysine 224, and glutamate 227. Glutamate 227 provides a ligand contact to Mn(2+).

It belongs to the DXR family. Mg(2+) serves as cofactor. It depends on Mn(2+) as a cofactor.

It catalyses the reaction 2-C-methyl-D-erythritol 4-phosphate + NADP(+) = 1-deoxy-D-xylulose 5-phosphate + NADPH + H(+). It participates in isoprenoid biosynthesis; isopentenyl diphosphate biosynthesis via DXP pathway; isopentenyl diphosphate from 1-deoxy-D-xylulose 5-phosphate: step 1/6. Its function is as follows. Catalyzes the NADPH-dependent rearrangement and reduction of 1-deoxy-D-xylulose-5-phosphate (DXP) to 2-C-methyl-D-erythritol 4-phosphate (MEP). This is 1-deoxy-D-xylulose 5-phosphate reductoisomerase from Arthrobacter sp. (strain FB24).